The following is a 185-amino-acid chain: Ribosome-recycling factor (185 aa).

This sequence belongs to the RRF family.

The protein localises to the cytoplasm. Responsible for the release of ribosomes from messenger RNA at the termination of protein biosynthesis. May increase the efficiency of translation by recycling ribosomes from one round of translation to another. In Frankia casuarinae (strain DSM 45818 / CECT 9043 / HFP020203 / CcI3), this protein is Ribosome-recycling factor.